A 1043-amino-acid polypeptide reads, in one-letter code: RNA cytidine acetyltransferase (1043 aa).

ATP-binding positions include 285 to 294 (GRGKSAAVGL) and arginine 462. The N-acetyltransferase domain occupies 551-736 (VLMAPIDKSR…VPVYIRQNSN (186 aa)). Acetyl-CoA-binding positions include 622 to 624 (VAV), 629 to 635 (QSMGYGG), and arginine 723. The disordered stretch occupies residues 1020 to 1043 (IPDAKDPANKNAKKKKRFSSGGRR). Over residues 1030 to 1043 (NAKKKKRFSSGGRR) the composition is skewed to basic residues.

Belongs to the RNA cytidine acetyltransferase family. NAT10 subfamily. As to quaternary structure, part of the small subunit (SSU) processome, composed of more than 70 proteins and the RNA chaperone small nucleolar RNA (snoRNA) U3.

It localises to the nucleus. The protein resides in the nucleolus. It catalyses the reaction a cytidine in 18S rRNA + acetyl-CoA + ATP + H2O = an N(4)-acetylcytidine in 18S rRNA + ADP + phosphate + CoA + H(+). It carries out the reaction a cytidine in tRNA + acetyl-CoA + ATP + H2O = an N(4)-acetylcytidine in tRNA + ADP + phosphate + CoA + H(+). In terms of biological role, RNA cytidine acetyltransferase with specificity toward both 18S rRNA and tRNAs. Catalyzes the formation of N(4)-acetylcytidine (ac4C) in 18S rRNA. Required for early nucleolar cleavages of precursor rRNA at sites A0, A1 and A2 during 18S rRNA synthesis. Catalyzes the formation of ac4C in serine and leucine tRNAs. Requires a tRNA-binding adapter protein for full tRNA acetyltransferase activity but not for 18S rRNA acetylation. Part of the small subunit (SSU) processome, first precursor of the small eukaryotic ribosomal subunit. During the assembly of the SSU processome in the nucleolus, many ribosome biogenesis factors, an RNA chaperone and ribosomal proteins associate with the nascent pre-rRNA and work in concert to generate RNA folding, modifications, rearrangements and cleavage as well as targeted degradation of pre-ribosomal RNA by the RNA exosome. This chain is RNA cytidine acetyltransferase, found in Caenorhabditis elegans.